We begin with the raw amino-acid sequence, 471 residues long: Ribulose bisphosphate carboxylase large chain (471 aa).

Lysine 5 carries the N6,N6,N6-trimethyllysine modification. Substrate-binding residues include asparagine 114 and threonine 164. Lysine 166 acts as the Proton acceptor in catalysis. Lysine 168 provides a ligand contact to substrate. The Mg(2+) site is built by lysine 192, aspartate 194, and glutamate 195. Lysine 192 bears the N6-carboxylysine mark. Catalysis depends on histidine 285, which acts as the Proton acceptor. Substrate contacts are provided by arginine 286, histidine 318, and serine 370.

This sequence belongs to the RuBisCO large chain family. Type I subfamily. Heterohexadecamer of 8 large chains and 8 small chains; disulfide-linked. The disulfide link is formed within the large subunit homodimers. Mg(2+) serves as cofactor. The disulfide bond which can form in the large chain dimeric partners within the hexadecamer appears to be associated with oxidative stress and protein turnover.

Its subcellular location is the plastid. It localises to the chloroplast. It catalyses the reaction 2 (2R)-3-phosphoglycerate + 2 H(+) = D-ribulose 1,5-bisphosphate + CO2 + H2O. The catalysed reaction is D-ribulose 1,5-bisphosphate + O2 = 2-phosphoglycolate + (2R)-3-phosphoglycerate + 2 H(+). Its function is as follows. RuBisCO catalyzes two reactions: the carboxylation of D-ribulose 1,5-bisphosphate, the primary event in carbon dioxide fixation, as well as the oxidative fragmentation of the pentose substrate in the photorespiration process. Both reactions occur simultaneously and in competition at the same active site. The polypeptide is Ribulose bisphosphate carboxylase large chain (Chiococca alba (West Indian milkberry)).